A 182-amino-acid polypeptide reads, in one-letter code: ADP-ribosylation factor-like protein 3 (182 aa).

The N-myristoyl glycine moiety is linked to residue G2. GTP-binding positions include 24–31 (GLDNAGKT), 67–71 (DIGGQ), and 126–129 (NKQD).

Belongs to the small GTPase superfamily. Arf family.

It localises to the golgi apparatus membrane. It is found in the cytoplasm. The protein localises to the cytoskeleton. The protein resides in the spindle. Its subcellular location is the nucleus. It localises to the microtubule organizing center. It is found in the centrosome. The protein localises to the cell projection. The protein resides in the cilium. In terms of biological role, small GTP-binding protein which cycles between an inactive GDP-bound and an active GTP-bound form, and the rate of cycling is regulated by guanine nucleotide exchange factors (GEF) and GTPase-activating proteins (GAP). Required for normal cytokinesis and cilia signaling. Required for targeting proteins to the ciliary membrane by releasing myristoylated protein from unc119 cargo adapters into the cilium. The chain is ADP-ribosylation factor-like protein 3 (ARL3) from Taeniopygia guttata (Zebra finch).